The primary structure comprises 386 residues: S-adenosylmethionine synthase (386 aa).

An ATP-binding site is contributed by His17. Residue Asp19 coordinates Mg(2+). Glu45 provides a ligand contact to K(+). Residues Glu58 and Gln101 each contribute to the L-methionine site. A flexible loop region spans residues 101 to 111; it reads QSPDISQGVTE. Residues 168–170, Asp242, 248–249, Ala265, and Lys269 each bind ATP; these read DAK and RK. Asp242 is an L-methionine binding site. Position 273 (Lys273) interacts with L-methionine.

Belongs to the AdoMet synthase family. As to quaternary structure, homotetramer; dimer of dimers. Requires Mg(2+) as cofactor. It depends on K(+) as a cofactor.

It is found in the cytoplasm. It carries out the reaction L-methionine + ATP + H2O = S-adenosyl-L-methionine + phosphate + diphosphate. The protein operates within amino-acid biosynthesis; S-adenosyl-L-methionine biosynthesis; S-adenosyl-L-methionine from L-methionine: step 1/1. Its function is as follows. Catalyzes the formation of S-adenosylmethionine (AdoMet) from methionine and ATP. The overall synthetic reaction is composed of two sequential steps, AdoMet formation and the subsequent tripolyphosphate hydrolysis which occurs prior to release of AdoMet from the enzyme. The polypeptide is S-adenosylmethionine synthase (Leptospira borgpetersenii serovar Hardjo-bovis (strain JB197)).